The sequence spans 361 residues: tRNA(Ile)-lysidine synthase (361 aa).

32-37 (SGGPDS) is an ATP binding site.

It belongs to the tRNA(Ile)-lysidine synthase family.

The protein localises to the cytoplasm. It carries out the reaction cytidine(34) in tRNA(Ile2) + L-lysine + ATP = lysidine(34) in tRNA(Ile2) + AMP + diphosphate + H(+). Functionally, ligates lysine onto the cytidine present at position 34 of the AUA codon-specific tRNA(Ile) that contains the anticodon CAU, in an ATP-dependent manner. Cytidine is converted to lysidine, thus changing the amino acid specificity of the tRNA from methionine to isoleucine. This is tRNA(Ile)-lysidine synthase from Bradyrhizobium diazoefficiens (strain JCM 10833 / BCRC 13528 / IAM 13628 / NBRC 14792 / USDA 110).